We begin with the raw amino-acid sequence, 130 residues long: MYSAVTRGIEVTVEPFYLEVQSEPEENRYVWGYRVTIVNNSSETVQLCSRYWQITDANGHVQEVRGSGVVGEQPVLDPGDSYQYSSGCPLTTSSGVMVGRYQMKGEDGAQFEIEIPAFSLDVPEQRRTLN.

The region spanning 3–127 (SAVTRGIEVT…FSLDVPEQRR (125 aa)) is the ApaG domain.

The sequence is that of Protein ApaG from Brucella canis (strain ATCC 23365 / NCTC 10854 / RM-666).